Here is a 318-residue protein sequence, read N- to C-terminus: Acetyl-coenzyme A carboxylase carboxyl transferase subunit alpha (318 aa).

The 258-residue stretch at 36-293 (EIDRLKEKST…KTRLSEQLDQ (258 aa)) folds into the CoA carboxyltransferase C-terminal domain.

It belongs to the AccA family. In terms of assembly, acetyl-CoA carboxylase is a heterohexamer composed of biotin carboxyl carrier protein (AccB), biotin carboxylase (AccC) and two subunits each of ACCase subunit alpha (AccA) and ACCase subunit beta (AccD).

It is found in the cytoplasm. It carries out the reaction N(6)-carboxybiotinyl-L-lysyl-[protein] + acetyl-CoA = N(6)-biotinyl-L-lysyl-[protein] + malonyl-CoA. It functions in the pathway lipid metabolism; malonyl-CoA biosynthesis; malonyl-CoA from acetyl-CoA: step 1/1. Its function is as follows. Component of the acetyl coenzyme A carboxylase (ACC) complex. First, biotin carboxylase catalyzes the carboxylation of biotin on its carrier protein (BCCP) and then the CO(2) group is transferred by the carboxyltransferase to acetyl-CoA to form malonyl-CoA. This is Acetyl-coenzyme A carboxylase carboxyl transferase subunit alpha from Teredinibacter turnerae (strain ATCC 39867 / T7901).